The chain runs to 195 residues: Imidazoleglycerol-phosphate dehydratase (195 aa).

The protein belongs to the imidazoleglycerol-phosphate dehydratase family.

It is found in the cytoplasm. The catalysed reaction is D-erythro-1-(imidazol-4-yl)glycerol 3-phosphate = 3-(imidazol-4-yl)-2-oxopropyl phosphate + H2O. It participates in amino-acid biosynthesis; L-histidine biosynthesis; L-histidine from 5-phospho-alpha-D-ribose 1-diphosphate: step 6/9. The chain is Imidazoleglycerol-phosphate dehydratase from Thermotoga petrophila (strain ATCC BAA-488 / DSM 13995 / JCM 10881 / RKU-1).